We begin with the raw amino-acid sequence, 119 residues long: Large ribosomal subunit protein bL20 (119 aa).

The protein belongs to the bacterial ribosomal protein bL20 family.

Its function is as follows. Binds directly to 23S ribosomal RNA and is necessary for the in vitro assembly process of the 50S ribosomal subunit. It is not involved in the protein synthesizing functions of that subunit. The polypeptide is Large ribosomal subunit protein bL20 (Brevibacillus brevis (strain 47 / JCM 6285 / NBRC 100599)).